A 359-amino-acid polypeptide reads, in one-letter code: AA9 family lytic polysaccharide monooxygenase C (359 aa).

Positions 1-16 (MKTGSILAALVASASA) are cleaved as a signal peptide. The Cu(2+) site is built by His-17 and His-99. 2 disulfides stabilise this stretch: Cys-55–Cys-185 and Cys-155–Cys-243. Residues His-171 and Gln-180 each coordinate O2. Cu(2+) is bound at residue Tyr-182. N-linked (GlcNAc...) asparagine glycosylation is found at Asn-189 and Asn-284. The segment at 244–320 (PAGGSGGSSP…NPQPTNGGNS (77 aa)) is disordered. Residues 251–296 (SSPAPATTASTPKPTSASAPKPVSTTASTPKPTNGSGSGTGAAHST) are compositionally biased toward low complexity. The span at 307–319 (TKASNPQPTNGGN) shows a compositional bias: polar residues. The 36-residue stretch at 323 to 358 (RAAALYGQCGGKGWTGPTSCASGTCKFSNDWYSQCL) folds into the CBM1 domain.

This sequence belongs to the polysaccharide monooxygenase AA9 family. Requires Cu(2+) as cofactor.

It localises to the secreted. It carries out the reaction [(1-&gt;4)-beta-D-glucosyl]n+m + reduced acceptor + O2 = 4-dehydro-beta-D-glucosyl-[(1-&gt;4)-beta-D-glucosyl]n-1 + [(1-&gt;4)-beta-D-glucosyl]m + acceptor + H2O.. Its activity is regulated as follows. Activity in inhibited by excessive amounts of H(2)O(2). In terms of biological role, lytic polysaccharide monooxygenase (LPMO) that depolymerizes crystalline and amorphous polysaccharides via the oxidation of scissile alpha- or beta-(1-4)-glycosidic bonds, yielding C4 oxidation products. Catalysis by LPMOs requires the reduction of the active-site copper from Cu(II) to Cu(I) by a reducing agent and H(2)O(2) or O(2) as a cosubstrate. Degrades various hemicelluloses, in particular xyloglucan. Active on tamarind xyloglucan and konjac glucomannan. Acts on the glucose backbone of xyloglucan, accepting various substitutions (xylose, galactose) in almost allpositions. In contrast to all previously characterized LPMOs, which are active only on polysaccharides, is able to cleave soluble cello-oligosaccharides as short as a tetramer. The cello-oligosaccharide products released by this enzyme contain a C4 gemdiol/keto group at the non-reducing end. Binds to the inner wood cell wall layer and consumes enzymatically generated H(2)O(2). This is AA9 family lytic polysaccharide monooxygenase C (gh61-3) from Neurospora crassa (strain ATCC 24698 / 74-OR23-1A / CBS 708.71 / DSM 1257 / FGSC 987).